The following is a 155-amino-acid chain: Molybdopterin synthase catalytic subunit 2 (155 aa).

Residues 101 to 102, Lys-117, and 124 to 126 contribute to the substrate site; these read HR and KKE.

This sequence belongs to the MoaE family. MOCS2B subfamily. Heterotetramer; composed of 2 small (MOCS2A) and 2 large (MOCS2B) subunits.

Its subcellular location is the cytoplasm. It carries out the reaction 2 [molybdopterin-synthase sulfur-carrier protein]-C-terminal-Gly-aminoethanethioate + cyclic pyranopterin phosphate + H2O = molybdopterin + 2 [molybdopterin-synthase sulfur-carrier protein]-C-terminal Gly-Gly + 2 H(+). Its pathway is cofactor biosynthesis; molybdopterin biosynthesis. In terms of biological role, catalytic subunit of the molybdopterin synthase complex, a complex that catalyzes the conversion of precursor Z into molybdopterin. Acts by mediating the incorporation of 2 sulfur atoms from thiocarboxylated MOCS2A into precursor Z to generate a dithiolene group. This is Molybdopterin synthase catalytic subunit 2 from Aedes aegypti (Yellowfever mosquito).